Reading from the N-terminus, the 236-residue chain is Nopaline transport system permease protein NocQ (236 aa).

The region spanning 21–222 (AMMTVVVAAC…LLSSVSNRGF (202 aa)) is the ABC transmembrane type-1 domain. Transmembrane regions (helical) follow at residues 25–45 (VVVAACSYFFGIIFGSLFAAA), 63–83 (VVRGVPELLIIFLVFFGGGTL), 102–122 (IFVIGVLCISVSAGAYATEVI), and 199–219 (QPFTFYITAFVIFLLLSSVSN).

The protein belongs to the binding-protein-dependent transport system permease family. HisMQ subfamily.

The protein localises to the cell inner membrane. In terms of biological role, component of the nopaline active transport system probably consisting of four subunits: Q, M, P and T. This system is also capable of transporting octopine provided that catabolic functions are induced with nopaline. In Agrobacterium fabrum (strain C58 / ATCC 33970) (Agrobacterium tumefaciens (strain C58)), this protein is Nopaline transport system permease protein NocQ (nocQ).